Consider the following 488-residue polypeptide: Ribulose bisphosphate carboxylase large chain 1 (488 aa).

Substrate contacts are provided by asparagine 128 and threonine 178. Lysine 180 (proton acceptor) is an active-site residue. A substrate-binding site is contributed by lysine 182. Mg(2+) is bound by residues lysine 206, aspartate 208, and glutamate 209. Lysine 206 is modified (N6-carboxylysine). The active-site Proton acceptor is the histidine 298. Substrate contacts are provided by arginine 299, histidine 331, and serine 383.

Belongs to the RuBisCO large chain family. Type I subfamily. In terms of assembly, heterohexadecamer of 8 large chains and 8 small chains. Requires Mg(2+) as cofactor.

The enzyme catalyses 2 (2R)-3-phosphoglycerate + 2 H(+) = D-ribulose 1,5-bisphosphate + CO2 + H2O. It catalyses the reaction D-ribulose 1,5-bisphosphate + O2 = 2-phosphoglycolate + (2R)-3-phosphoglycerate + 2 H(+). RuBisCO catalyzes two reactions: the carboxylation of D-ribulose 1,5-bisphosphate, the primary event in carbon dioxide fixation, as well as the oxidative fragmentation of the pentose substrate. Both reactions occur simultaneously and in competition at the same active site. The polypeptide is Ribulose bisphosphate carboxylase large chain 1 (Nitrobacter hamburgensis (strain DSM 10229 / NCIMB 13809 / X14)).